A 349-amino-acid polypeptide reads, in one-letter code: MENIETILRLAEDKILLVQNLKALQEYKVEFLGKNGIVTGELKKLGSLNEQERKEFGLKINKLKDKIQNIIKAKAEILEEQELNFKLAADKIDLTIPARRYKQGSIHPITQCSEELIQVFSQFGFTIENGPNIENDFYNFTALNFEDDHPARQMHDTFYLKSQENNKPLLLRTHTSTVQIRAMKNGKPPFRFIAPGRTYRSDSDMTHTPMFHQIEGLVMDKNINMGHLKYVITTFIKSFFENSNIELRFRPSFFPFTEPSSEVDIRMNKNDKWLEVLGCGMVHPNVLKNVGIDSSEYQGFAFGLGVERFAMLKYNIKDLRQFFEGDMRWLKHYNFGSFDIPNLAGGLTK.

E258 lines the Mg(2+) pocket.

The protein belongs to the class-II aminoacyl-tRNA synthetase family. Phe-tRNA synthetase alpha subunit type 1 subfamily. In terms of assembly, tetramer of two alpha and two beta subunits. The cofactor is Mg(2+).

The protein localises to the cytoplasm. The enzyme catalyses tRNA(Phe) + L-phenylalanine + ATP = L-phenylalanyl-tRNA(Phe) + AMP + diphosphate + H(+). The polypeptide is Phenylalanine--tRNA ligase alpha subunit (Rickettsia africae (strain ESF-5)).